Reading from the N-terminus, the 186-residue chain is Ribosome-recycling factor (186 aa).

Belongs to the RRF family.

It localises to the cytoplasm. Functionally, responsible for the release of ribosomes from messenger RNA at the termination of protein biosynthesis. May increase the efficiency of translation by recycling ribosomes from one round of translation to another. The protein is Ribosome-recycling factor of Rickettsia canadensis (strain McKiel).